Reading from the N-terminus, the 237-residue chain is Golgi anti-apoptotic protein (237 aa).

The Cytoplasmic portion of the chain corresponds to 1-37 (MAMPSLSACSSIEDDFNYGSSVASASVHIRMAFLRKV). Residues 38–58 (YGILCLQFLLTTATTAVFLYF) traverse the membrane as a helical segment. The Lumenal segment spans residues 59–67 (DCMRTFIQG). A helical transmembrane segment spans residues 68 to 88 (SPVLILASMFGSIGLIFALTL). Residues 89–94 (HRHKHP) lie on the Cytoplasmic side of the membrane. A helical membrane pass occupies residues 95–115 (LNLYLLCGFTLSESLTLASVV). A topological domain (lumenal) is located at residue Thr116. Residues 117 to 137 (FYDVHVVMQAFMLTTAAFLAL) traverse the membrane as a helical segment. Over 138–151 (TTYTLQSKRDFSKL) the chain is Cytoplasmic. Residues 152–172 (GAGLFAALWILILSGLLGIFV) traverse the membrane as a helical segment. Residues 173 to 174 (QN) lie on the Lumenal side of the membrane. The chain crosses the membrane as a helical span at residues 175–195 (ETVKLVLSAFGALVFCGFIIY). The Cytoplasmic portion of the chain corresponds to 196–209 (DTHSLIHKLSPEEY). Positions 210–230 (VLASINLYLDIINLFLHLLQL) form an intramembrane region, helical. Topologically, residues 231-237 (LEVSNKK) are cytoplasmic.

This sequence belongs to the BI1 family. LFG subfamily.

Its subcellular location is the host Golgi apparatus membrane. In terms of biological role, may affect virulence through inhibition of apoptosis. The sequence is that of Golgi anti-apoptotic protein (L6) from Vaccinia virus (strain LC16m0) (VACV).